The sequence spans 307 residues: Small ribosomal subunit protein bS1 (307 aa).

S1 motif domains lie at 32–101, 119–183, and 197–265; these read GDTV…LSIR, DATV…LSHR, and GEVV…LSTK.

This sequence belongs to the bacterial ribosomal protein bS1 family.

In terms of biological role, binds mRNA. In Synechococcus sp. (strain ATCC 27144 / PCC 6301 / SAUG 1402/1) (Anacystis nidulans), this protein is Small ribosomal subunit protein bS1 (rpsA).